Consider the following 186-residue polypeptide: ATP synthase subunit delta (186 aa).

It belongs to the ATPase delta chain family. F-type ATPases have 2 components, F(1) - the catalytic core - and F(0) - the membrane proton channel. F(1) has five subunits: alpha(3), beta(3), gamma(1), delta(1), epsilon(1). CF(0) has four main subunits: a(1), b(1), b'(1) and c(10-14). The alpha and beta chains form an alternating ring which encloses part of the gamma chain. F(1) is attached to F(0) by a central stalk formed by the gamma and epsilon chains, while a peripheral stalk is formed by the delta, b and b' chains.

It is found in the cell inner membrane. Its function is as follows. F(1)F(0) ATP synthase produces ATP from ADP in the presence of a proton or sodium gradient. F-type ATPases consist of two structural domains, F(1) containing the extramembraneous catalytic core and F(0) containing the membrane proton channel, linked together by a central stalk and a peripheral stalk. During catalysis, ATP synthesis in the catalytic domain of F(1) is coupled via a rotary mechanism of the central stalk subunits to proton translocation. This protein is part of the stalk that links CF(0) to CF(1). It either transmits conformational changes from CF(0) to CF(1) or is implicated in proton conduction. The polypeptide is ATP synthase subunit delta (Cereibacter sphaeroides (strain ATCC 17029 / ATH 2.4.9) (Rhodobacter sphaeroides)).